The primary structure comprises 335 residues: Glyceraldehyde-3-phosphate dehydrogenase (335 aa).

NAD(+)-binding positions include 11-12 (TI) and Gly110. A D-glyceraldehyde 3-phosphate-binding site is contributed by 139-141 (SCN). Catalysis depends on Cys140, which acts as the Nucleophile. Residue Arg168 participates in NAD(+) binding. 194-195 (HG) is a binding site for D-glyceraldehyde 3-phosphate. Gln301 contacts NAD(+).

Belongs to the glyceraldehyde-3-phosphate dehydrogenase family. As to quaternary structure, homotetramer.

Its subcellular location is the cytoplasm. The catalysed reaction is D-glyceraldehyde 3-phosphate + phosphate + NADP(+) = (2R)-3-phospho-glyceroyl phosphate + NADPH + H(+). It catalyses the reaction D-glyceraldehyde 3-phosphate + phosphate + NAD(+) = (2R)-3-phospho-glyceroyl phosphate + NADH + H(+). Its pathway is carbohydrate degradation; glycolysis; pyruvate from D-glyceraldehyde 3-phosphate: step 1/5. This is Glyceraldehyde-3-phosphate dehydrogenase from Halobacterium salinarum (strain ATCC 29341 / DSM 671 / R1).